We begin with the raw amino-acid sequence, 894 residues long: Alpha-actinin-2 (894 aa).

Residues 1–254 form an actin-binding region; the sequence is MNQIEPGVQY…IMTYVSCFYH (254 aa). Calponin-homology (CH) domains follow at residues 38–142 and 151–257; these read KQQR…LRFA and TSAK…HAFA. Position 237 is a phosphothreonine (threonine 237). Spectrin repeat units follow at residues 281–391, 401–506, 516–627, and 637–740; these read RLME…WLLN, HLAE…ALER, QLHL…SLQE, and RLRR…EVET. 2 consecutive EF-hand domains span residues 753–788 and 789–824; these read EQMN…MGYD and LGEA…ETAD. Ca(2+) contacts are provided by aspartate 766, asparagine 770, aspartate 777, aspartate 802, asparagine 804, and threonine 808.

Belongs to the alpha-actinin family. As to quaternary structure, homodimer; antiparallel. Also forms heterodimers with ACTN3. Interacts with ADAM12, MYOZ1, MYOZ2 and MYOZ3. Interacts via its C-terminal region with the LDB3 PDZ domain. Interacts with XIRP2. Interacts with DST (via N-terminus). Interacts with PARVB. Interacts with SYNPO2. Ubiquitinated by FBXL22, leading to proteasomal degradation.

Its subcellular location is the cytoplasm. It is found in the myofibril. It localises to the sarcomere. The protein localises to the z line. Functionally, F-actin cross-linking protein which is thought to anchor actin to a variety of intracellular structures. This is a bundling protein. The protein is Alpha-actinin-2 (Actn2) of Mus musculus (Mouse).